A 412-amino-acid chain; its full sequence is MKIMGKKARNAALVLAVVSAEQKKHALEMIALSLESQADEILCANNQDLINAAQNNMAAAMIDRLKLDELRLCAMIDSVRQIACLPDPVGQVINAWTRPNGLHISCVRTPLGVIGIIYESRPNVTIDASCLCLKSGNAAILRGGSDSFHSAYALHSALAMGLEKAGLPTDAIQMVETTDRDAVGEMLKGLDGTIDVIIPRGGQSLVKRVQSDARVPVFAHLAGLCHIYIDQSANVEMARDIVLNAKLRRTGICGAVETVLIDRQALEKFLPVLIALQEKGCEIRATEDIVSLVPTFALACEEDWSQEYLDAILSVKTVEGVEGAIEHIVRYSSGHTESIIAEDVGVVEIFFNRLDSAILLHNASTQFADGGEFGFGAEIGIATGKMHARGPIGVEQLTSFQYQIRGNGQVRP.

Belongs to the gamma-glutamyl phosphate reductase family.

The protein resides in the cytoplasm. The enzyme catalyses L-glutamate 5-semialdehyde + phosphate + NADP(+) = L-glutamyl 5-phosphate + NADPH + H(+). It functions in the pathway amino-acid biosynthesis; L-proline biosynthesis; L-glutamate 5-semialdehyde from L-glutamate: step 2/2. Catalyzes the NADPH-dependent reduction of L-glutamate 5-phosphate into L-glutamate 5-semialdehyde and phosphate. The product spontaneously undergoes cyclization to form 1-pyrroline-5-carboxylate. This is Gamma-glutamyl phosphate reductase from Bartonella bacilliformis (strain ATCC 35685 / KC583 / Herrer 020/F12,63).